Here is an 87-residue protein sequence, read N- to C-terminus: Pyocin-S2 immunity protein (87 aa).

Belongs to the colicins ColE2/ColE8/ColE9 and pyocins S1/S2 family.

The polypeptide is Pyocin-S2 immunity protein (imm2) (Pseudomonas aeruginosa (strain ATCC 15692 / DSM 22644 / CIP 104116 / JCM 14847 / LMG 12228 / 1C / PRS 101 / PAO1)).